A 335-amino-acid chain; its full sequence is Terpene synthase 4 (335 aa).

A DDxx(x)D/E motif motif is present at residues 103-108; it reads DDYIFE. The NDxxSxxxD/E motif motif lies at 243–251; the sequence is NDLYSFNRE.

This sequence belongs to the terpene synthase family.

The enzyme catalyses (2E,6E)-farnesyl diphosphate + H2O = (6E)-nerolidol + diphosphate. Terpene synthase that converts its substrate farnesyl diphosphate (FPP) into the sesquiterpene (E)-nerolidol. This is Terpene synthase 4 from Dictyostelium discoideum (Social amoeba).